A 439-amino-acid polypeptide reads, in one-letter code: AP-2 complex subunit mu (439 aa).

An MHD domain is found at 172–438; it reads RNELYIDVVE…LTKAGTYQNR (267 aa).

Belongs to the adaptor complexes medium subunit family. As to quaternary structure, adaptor protein complex 2 (AP-2) is a heterotetramer composed of two large adaptins (alpha-type and beta-type subunits), a medium adaptin (mu-type subunit AP50) and a small adaptin (sigma-type subunit AP17). Post-translationally, phosphorylated.

It is found in the cell membrane. The protein localises to the membrane. The protein resides in the coated pit. Functionally, component of the adaptor complexes which link clathrin to receptors in coated vesicles. Clathrin-associated protein complexes are believed to interact with the cytoplasmic tails of membrane proteins, leading to their selection and concentration. AP50 is a subunit of the plasma membrane adaptor. The protein is AP-2 complex subunit mu (apm2) of Dictyostelium discoideum (Social amoeba).